An 834-amino-acid polypeptide reads, in one-letter code: Periplasmic nitrate reductase (834 aa).

The segment at residues 1-29 is a signal peptide (tat-type signal); sequence MNLTRREFAKANAAAIAAAAAGLPILVRA. Residues 41–97 form the 4Fe-4S Mo/W bis-MGD-type domain; that stretch reads LDWNKAPCRFCGTGCSVMVATRDGQVVATHGDIKAEVNRGINCVKGYFLSKIMYGSD. Residues Cys-48, Cys-51, Cys-55, and Cys-83 each contribute to the [4Fe-4S] cluster site. Residues Lys-85, Gln-152, Asn-177, Cys-181, 214–221, 245–249, 264–266, Met-375, Gln-379, Asn-485, 511–512, Lys-534, Asp-561, and 721–730 each bind Mo-bis(molybdopterin guanine dinucleotide); these read WGSNMAEM, STFEH, QTD, SD, and TGRVLEHWHT. Phe-797 provides a ligand contact to substrate. Mo-bis(molybdopterin guanine dinucleotide)-binding residues include Asn-805 and Lys-822.

The protein belongs to the prokaryotic molybdopterin-containing oxidoreductase family. NasA/NapA/NarB subfamily. As to quaternary structure, component of the periplasmic nitrate reductase NapAB complex composed of NapA and NapB. Requires [4Fe-4S] cluster as cofactor. Mo-bis(molybdopterin guanine dinucleotide) serves as cofactor. In terms of processing, predicted to be exported by the Tat system. The position of the signal peptide cleavage has not been experimentally proven.

It localises to the periplasm. It carries out the reaction 2 Fe(II)-[cytochrome] + nitrate + 2 H(+) = 2 Fe(III)-[cytochrome] + nitrite + H2O. Its function is as follows. Catalytic subunit of the periplasmic nitrate reductase complex NapAB. Receives electrons from NapB and catalyzes the reduction of nitrate to nitrite. The chain is Periplasmic nitrate reductase from Pseudomonas paraeruginosa (strain DSM 24068 / PA7) (Pseudomonas aeruginosa (strain PA7)).